We begin with the raw amino-acid sequence, 348 residues long: Outer membrane protein A (348 aa).

A signal peptide spans 1–21; it reads MKKTAIAIAVALAGFATVAQA. Beta stranded transmembrane passes span 27-37, 55-66, 70-78, 96-107, 112-120, 146-155, 160-167, and 186-194; these read TWYTGAKLGWS, QLGAGAFGGYQV, VGFEMGYDW, QGVQLTAKLGYP, LDIYTRLGG, PVFAGGVEYA, IATRLEYQ, and LLSLGVSYR. The tract at residues 201–210 is hinge-like; the sequence is APVVAPAPAP. Tandem repeats lie at residues 205–206, 207–208, and 209–210. Positions 205–210 are 3 X 2 AA tandem repeats of A-P; that stretch reads APAPAP. The OmpA-like domain occupies 212-340; sequence VQTKHFTLKS…RVEIEVKGIK (129 aa). Cys313 and Cys325 are oxidised to a cystine.

This sequence belongs to the outer membrane OOP (TC 1.B.6) superfamily. OmpA family. As to quaternary structure, monomer and homodimer. In terms of assembly, (Microbial infection) Upon infection with phage Sf6 associates with the mature bacteriophage capsid. Was originally suggested to be within the bacteriophage capsid. This has been disproven.

The protein resides in the extracellular vesicle. Its subcellular location is the cell outer membrane. Its function is as follows. With TolR probably plays a role in maintaining the position of the peptidoglycan cell wall in the periplasm. Acts as a porin with low permeability that allows slow penetration of small solutes; an internal gate slows down solute passage. In terms of biological role, required for conjugation with F-type plasmids; probably serves as the mating receptor on recipient cells. Functionally, (Microbial infection) Serves as a secondary receptor during phage Sf6 infection; infection requires both lipopolysaccharide (LPS) and the OmpA beta-barrel. This chain is Outer membrane protein A, found in Shigella flexneri.